Here is a 55-residue protein sequence, read N- to C-terminus: Large ribosomal subunit protein bL33 (55 aa).

This sequence belongs to the bacterial ribosomal protein bL33 family.

The polypeptide is Large ribosomal subunit protein bL33 (Dehalococcoides mccartyi (strain ATCC BAA-2100 / JCM 16839 / KCTC 5957 / BAV1)).